We begin with the raw amino-acid sequence, 838 residues long: Periplasmic nitrate reductase (838 aa).

A signal peptide (tat-type signal) is located at residues 1-29 (MDMSRRTLLKAQAAAAAAAVAGIDLPAEA). In terms of domain architecture, 4Fe-4S Mo/W bis-MGD-type spans 40–96 (LKWSKAPCRFCGTGCGVMVGVKDGRVVATHGDMQAEVNRGLNCVKGYFLSKIMYGAD). [4Fe-4S] cluster is bound by residues cysteine 47, cysteine 50, cysteine 54, and cysteine 82. Mo-bis(molybdopterin guanine dinucleotide) contacts are provided by residues lysine 84, glutamine 151, asparagine 176, cysteine 180, 213 to 220 (WGSNMAEM), 244 to 248 (STYEH), 263 to 265 (GTD), methionine 374, glutamine 378, asparagine 484, 510 to 511 (SD), lysine 533, aspartate 560, and 720 to 729 (TGRVLEHWHS). Phenylalanine 796 contacts substrate. Mo-bis(molybdopterin guanine dinucleotide)-binding residues include asparagine 804 and lysine 821.

This sequence belongs to the prokaryotic molybdopterin-containing oxidoreductase family. NasA/NapA/NarB subfamily. Component of the periplasmic nitrate reductase NapAB complex composed of NapA and NapB. It depends on [4Fe-4S] cluster as a cofactor. Mo-bis(molybdopterin guanine dinucleotide) is required as a cofactor. Post-translationally, predicted to be exported by the Tat system. The position of the signal peptide cleavage has not been experimentally proven.

Its subcellular location is the periplasm. It catalyses the reaction 2 Fe(II)-[cytochrome] + nitrate + 2 H(+) = 2 Fe(III)-[cytochrome] + nitrite + H2O. Its function is as follows. Catalytic subunit of the periplasmic nitrate reductase complex NapAB. Receives electrons from NapB and catalyzes the reduction of nitrate to nitrite. This Methylobacterium sp. (strain 4-46) protein is Periplasmic nitrate reductase.